The chain runs to 368 residues: E3 ubiquitin-protein ligase ATL31 (368 aa).

An N-terminal signal peptide occupies residues 1 to 23; that stretch reads MDPIKHISLPVLVLFLLLSVSAG. The helical transmembrane segment at 46–66 threads the bilayer; the sequence is AVVVVVVIAALFFMGFFTVYI. The RING-type; atypical zinc-finger motif lies at 124 to 166; the sequence is CAICLNEFEDDETLRLLPKCDHVFHPHCIGAWLQGHVTCPVCR. At serine 247 the chain carries Phosphoserine. The disordered stretch occupies residues 342 to 368; it reads NKDGEGTSSVQHIGTVGSTSGSLRLPV. A compositionally biased stretch (polar residues) spans 347 to 368; the sequence is GTSSVQHIGTVGSTSGSLRLPV.

It belongs to the RING-type zinc finger family. ATL subfamily.

The protein resides in the membrane. The catalysed reaction is S-ubiquitinyl-[E2 ubiquitin-conjugating enzyme]-L-cysteine + [acceptor protein]-L-lysine = [E2 ubiquitin-conjugating enzyme]-L-cysteine + N(6)-ubiquitinyl-[acceptor protein]-L-lysine.. It participates in protein modification; protein ubiquitination. E3 ubiquitin-protein ligase that is required for the plant C/N response during seedling growth transition. May be involved in the early steps of the plant defense signaling pathway. The protein is E3 ubiquitin-protein ligase ATL31 (ATL31) of Arabidopsis thaliana (Mouse-ear cress).